Reading from the N-terminus, the 314-residue chain is 4-diphosphocytidyl-2-C-methyl-D-erythritol kinase (314 aa).

Residue K11 is part of the active site. 95-105 (PIGAGLAGGST) contacts ATP. The active site involves D137.

It belongs to the GHMP kinase family. IspE subfamily.

The catalysed reaction is 4-CDP-2-C-methyl-D-erythritol + ATP = 4-CDP-2-C-methyl-D-erythritol 2-phosphate + ADP + H(+). The protein operates within isoprenoid biosynthesis; isopentenyl diphosphate biosynthesis via DXP pathway; isopentenyl diphosphate from 1-deoxy-D-xylulose 5-phosphate: step 3/6. Catalyzes the phosphorylation of the position 2 hydroxy group of 4-diphosphocytidyl-2C-methyl-D-erythritol. This Synechococcus elongatus (strain ATCC 33912 / PCC 7942 / FACHB-805) (Anacystis nidulans R2) protein is 4-diphosphocytidyl-2-C-methyl-D-erythritol kinase.